The chain runs to 461 residues: MRYLPLFVYLNNKPVLVVGGGIVAFRKVQILQKTGAIIQIVAKTLCLNLKTTLFKKKIIWIGKVFQISMLDNVFLVIIATDDTDFNDMVFKYAEKRHILVNTVDDPAKCSFIFPAIIDRSPILIGISSGGQAPVLIRMLKEKLESLIPMSIGYVASLAGIWRNKIKQHITDIVYRRFFWEKLFYNGQISLLVEKGNFRKANRVIKDAVLNQLHNRKQGSVSLVGAGPGDKGLLTIRGLQVIQTADIILYDYLVNPDILDLSRKDANKICVGKIAKKHSISQNNLNHFMIQLAQQGNNVVRLKGGDSFIFGRGGEELQAVSKAGIMFQVVPGITSGIGVAAYAGIPLTHREYAHSVVFMTGHKRHQGDYKINWSLLSDNKQTIVIYMGQLNAVNISKNLICHGRHIYTPVAIISRGTYLDQKILIGTLIELEKLIYMVKKPTLLIIGDVVSLHNEISWFGNG.

The precorrin-2 dehydrogenase /sirohydrochlorin ferrochelatase stretch occupies residues 1–204 (MRYLPLFVYL…GNFRKANRVI (204 aa)). Residues 22-23 (IV) and 43-44 (KT) contribute to the NAD(+) site. Ser-128 bears the Phosphoserine mark. Residues 218–461 (GSVSLVGAGP…HNEISWFGNG (244 aa)) form a uroporphyrinogen-III C-methyltransferase region. Pro-227 is a binding site for S-adenosyl-L-methionine. Asp-250 functions as the Proton acceptor in the catalytic mechanism. Lys-272 acts as the Proton donor in catalysis. Residues 303 to 305 (GGD), Ile-308, Met-386, and Gly-415 each bind S-adenosyl-L-methionine.

It in the N-terminal section; belongs to the precorrin-2 dehydrogenase / sirohydrochlorin ferrochelatase family. The protein in the C-terminal section; belongs to the precorrin methyltransferase family.

The enzyme catalyses uroporphyrinogen III + 2 S-adenosyl-L-methionine = precorrin-2 + 2 S-adenosyl-L-homocysteine + H(+). It carries out the reaction precorrin-2 + NAD(+) = sirohydrochlorin + NADH + 2 H(+). The catalysed reaction is siroheme + 2 H(+) = sirohydrochlorin + Fe(2+). The protein operates within cofactor biosynthesis; adenosylcobalamin biosynthesis; precorrin-2 from uroporphyrinogen III: step 1/1. It functions in the pathway cofactor biosynthesis; adenosylcobalamin biosynthesis; sirohydrochlorin from precorrin-2: step 1/1. Its pathway is porphyrin-containing compound metabolism; siroheme biosynthesis; precorrin-2 from uroporphyrinogen III: step 1/1. It participates in porphyrin-containing compound metabolism; siroheme biosynthesis; siroheme from sirohydrochlorin: step 1/1. The protein operates within porphyrin-containing compound metabolism; siroheme biosynthesis; sirohydrochlorin from precorrin-2: step 1/1. Multifunctional enzyme that catalyzes the SAM-dependent methylations of uroporphyrinogen III at position C-2 and C-7 to form precorrin-2 via precorrin-1. Then it catalyzes the NAD-dependent ring dehydrogenation of precorrin-2 to yield sirohydrochlorin. Finally, it catalyzes the ferrochelation of sirohydrochlorin to yield siroheme. This Blochmanniella floridana protein is Siroheme synthase.